We begin with the raw amino-acid sequence, 629 residues long: Nicotinic receptor-associated protein 1 (629 aa).

C2 domains follow at residues 1-144 (MNQP…KAHL) and 162-299 (RTGS…ELLL). Aspartate 33, aspartate 39, aspartate 108, aspartate 110, aspartate 122, aspartate 192, aspartate 198, aspartate 254, aspartate 256, and aspartate 274 together coordinate Ca(2+). A VWFA domain is found at 342–561 (EFAVAVDFTA…LDPDVVQENL (220 aa)). Disordered regions lie at residues 581 to 600 (GFQP…PPDY) and 607 to 629 (IGRR…PPMY).

Belongs to the copine family. In terms of assembly, interacts with nicotinic acetylcholine receptor. It depends on Ca(2+) as a cofactor.

It localises to the cell membrane. Exhibits calcium-dependent phospholipid binding properties. May function in membrane trafficking. Regulates synaptic levels of nicotinic acetylcholine receptor subunit lev-1 and unc-38 in the nerve cord. Involved in nicotinic acetylcholine receptor (nAChR)-mediated sensitivity to nicotine and levamisole. Affects directional sperm motility. The polypeptide is Nicotinic receptor-associated protein 1 (Caenorhabditis briggsae).